The primary structure comprises 308 residues: tRNA dimethylallyltransferase (308 aa).

11 to 18 contributes to the ATP binding site; sequence GSTATGKS. 13–18 provides a ligand contact to substrate; that stretch reads TATGKS. An interaction with substrate tRNA region spans residues 36 to 39; the sequence is DSVQ.

Belongs to the IPP transferase family. Monomer. Mg(2+) serves as cofactor.

The catalysed reaction is adenosine(37) in tRNA + dimethylallyl diphosphate = N(6)-dimethylallyladenosine(37) in tRNA + diphosphate. Functionally, catalyzes the transfer of a dimethylallyl group onto the adenine at position 37 in tRNAs that read codons beginning with uridine, leading to the formation of N6-(dimethylallyl)adenosine (i(6)A). This Bdellovibrio bacteriovorus (strain ATCC 15356 / DSM 50701 / NCIMB 9529 / HD100) protein is tRNA dimethylallyltransferase.